The following is a 2731-amino-acid chain: Putative mediator of RNA polymerase II transcription subunit 12 (2731 aa).

Coiled coils occupy residues 5-37 (QQIL…QQQQ), 75-108 (HIQQ…QQVH), 141-189 (QQIH…QQQQ), and 275-304 (IQQL…QQQQ). 2 disordered regions span residues 29-57 (QQQM…HMIH) and 101-145 (QQQQ…QIHQ). Positions 310–320 (QPQQQQQQQQP) are enriched in low complexity. Disordered regions lie at residues 310-376 (QPQQ…DDKS), 432-451 (TQKS…RPVP), 685-708 (LGHG…QQPQ), and 1251-1341 (RNNN…QQKS). Over residues 327-337 (QNPSYHSQSQI) the composition is skewed to polar residues. Basic and acidic residues predominate over residues 347-361 (KKYEIQKPADKKELG). Residues 688 to 701 (GHGHGHGHHSHSHS) show a composition bias toward basic residues. Low complexity predominate over residues 1251–1268 (RNNNNNNKNKNNNKQSNN). Composition is skewed to acidic residues over residues 1275–1298 (NGEE…DNDE) and 1305–1326 (NDNE…DDQM). Coiled-coil stretches lie at residues 1316 to 1344 (EDED…SNEN) and 1375 to 1433 (KLKK…DEEL). 6 disordered regions span residues 1778–1825 (HDDN…NNNG), 1892–1958 (TQSS…NNTT), 2212–2258 (SSSS…NNVK), 2307–2351 (TSSV…QQQQ), 2472–2532 (EIEK…KPQT), and 2705–2731 (HQQI…NNYK). Composition is skewed to low complexity over residues 1783 to 1824 (ENNN…NNNN), 1892 to 1909 (TQSS…QSPT), 1916 to 1958 (NSTN…NNTT), 2212 to 2250 (SSSS…QQQQ), 2307 to 2322 (TSSV…STTS), 2337 to 2351 (QQQT…QQQQ), 2472 to 2501 (EIEK…HQQL), 2508 to 2532 (LQQQ…KPQT), and 2705 to 2720 (HQQI…HQQQ). Residues 2239–2270 (TNQQQQQQQQQQADQKNNVKKKLHELYQKIKS) are a coiled coil. The stretch at 2336–2363 (LQQQTSQQQQQQQQQQQQQSQQHQQQQQ) forms a coiled coil. A coiled-coil region spans residues 2523 to 2662 (QQLQQQKPQT…QQQQQQLQQL (140 aa)). The segment covering 2721-2731 (KCSTTKYNNYK) has biased composition (polar residues).

This sequence belongs to the Mediator complex subunit 12 family. Component of the Mediator complex.

It is found in the nucleus. Component of the Mediator complex, a coactivator involved in the regulated transcription of nearly all RNA polymerase II-dependent genes. Mediator functions as a bridge to convey information from gene-specific regulatory proteins to the basal RNA polymerase II transcription machinery. Mediator is recruited to promoters by direct interactions with regulatory proteins and serves as a scaffold for the assembly of a functional preinitiation complex with RNA polymerase II and the general transcription factors. This Dictyostelium discoideum (Social amoeba) protein is Putative mediator of RNA polymerase II transcription subunit 12 (med12).